A 402-amino-acid chain; its full sequence is UPF0261 protein BPP1817 (402 aa).

It belongs to the UPF0261 family.

The chain is UPF0261 protein BPP1817 from Bordetella parapertussis (strain 12822 / ATCC BAA-587 / NCTC 13253).